The chain runs to 615 residues: Elongation factor 4 (615 aa).

Residues 14–200 (ARIRNFCIIA…KVVELIPAPT (187 aa)) form the tr-type G domain. GTP-binding positions include 26–31 (DHGKST) and 147–150 (NKID).

This sequence belongs to the TRAFAC class translation factor GTPase superfamily. Classic translation factor GTPase family. LepA subfamily.

The protein resides in the cell membrane. It carries out the reaction GTP + H2O = GDP + phosphate + H(+). In terms of biological role, required for accurate and efficient protein synthesis under certain stress conditions. May act as a fidelity factor of the translation reaction, by catalyzing a one-codon backward translocation of tRNAs on improperly translocated ribosomes. Back-translocation proceeds from a post-translocation (POST) complex to a pre-translocation (PRE) complex, thus giving elongation factor G a second chance to translocate the tRNAs correctly. Binds to ribosomes in a GTP-dependent manner. This Corynebacterium glutamicum (strain ATCC 13032 / DSM 20300 / JCM 1318 / BCRC 11384 / CCUG 27702 / LMG 3730 / NBRC 12168 / NCIMB 10025 / NRRL B-2784 / 534) protein is Elongation factor 4.